A 134-amino-acid chain; its full sequence is Methylglyoxal synthase (134 aa).

The 134-residue stretch at 1-134 (MNIALIAHDN…DWRERVKERG (134 aa)) folds into the MGS-like domain. Residues His8, Lys12, 34–37 (TGTT), and 54–55 (SG) each bind substrate. Asp60 functions as the Proton donor/acceptor in the catalytic mechanism. His87 is a substrate binding site.

It belongs to the methylglyoxal synthase family.

The enzyme catalyses dihydroxyacetone phosphate = methylglyoxal + phosphate. Functionally, catalyzes the formation of methylglyoxal from dihydroxyacetone phosphate. The protein is Methylglyoxal synthase of Alkaliphilus metalliredigens (strain QYMF).